A 124-amino-acid polypeptide reads, in one-letter code: Holo-[acyl-carrier-protein] synthase (124 aa).

Mg(2+) contacts are provided by aspartate 8 and glutamate 56.

Belongs to the P-Pant transferase superfamily. AcpS family. Requires Mg(2+) as cofactor.

It localises to the cytoplasm. The enzyme catalyses apo-[ACP] + CoA = holo-[ACP] + adenosine 3',5'-bisphosphate + H(+). In terms of biological role, transfers the 4'-phosphopantetheine moiety from coenzyme A to a Ser of acyl-carrier-protein. The sequence is that of Holo-[acyl-carrier-protein] synthase from Nitratidesulfovibrio vulgaris (strain DP4) (Desulfovibrio vulgaris).